A 668-amino-acid chain; its full sequence is Ankyrin repeat domain-containing protein OPG023 (668 aa).

9 ANK repeats span residues F31–K64, N101–V131, K135–Y166, Y199–S231, N235–Y266, R277–I311, N334–K368, R458–I487, and N491–C521. A PRANC/F-box-like region spans residues G586–E666.

This sequence belongs to the orthopoxvirus OPG023 family. As to quaternary structure, interacts (via N-terminus) with host RELA. Interacts (via PRANC/F-box-like domain) with the SKP1 component of the host SCF ubiquitin ligase complex.

Functionally, substrate-specific adapter of SKP1-containing E3 ubiquitin-protein ligases which mediate the ubiquitination and subsequent proteasomal degradation of host target proteins. Prevents activation and subsequent nuclear localization of NF-kappa-B in infected cells, by targeting NF-kappa-B RELA subunit to the SCF E3 ligase complex. The chain is Ankyrin repeat domain-containing protein OPG023 (OPG023) from Bos taurus (Bovine).